The sequence spans 191 residues: Probable DNA-directed RNA polymerase subunit delta (191 aa).

The HTH HARE-type domain occupies leucine 14–tryptophan 83. The interval aspartate 118–leucine 191 is disordered.

The protein belongs to the RpoE family. As to quaternary structure, RNAP is composed of a core of 2 alpha, a beta and a beta' subunits. The core is associated with a delta subunit and one of several sigma factors.

In terms of biological role, participates in both the initiation and recycling phases of transcription. In the presence of the delta subunit, RNAP displays an increased specificity of transcription, a decreased affinity for nucleic acids, and an increased efficiency of RNA synthesis because of enhanced recycling. The protein is Probable DNA-directed RNA polymerase subunit delta of Streptococcus pyogenes serotype M18 (strain MGAS8232).